The following is a 75-amino-acid chain: Sec-independent protein translocase protein TatA (75 aa).

A helical membrane pass occupies residues 1 to 21 (MGSFSIWHWLVVLAIVLLVFG). The tract at residues 41–75 (KGMRDEDKPNAQLGDESRTQDASRTAQDEHDRNAR) is disordered.

This sequence belongs to the TatA/E family. The Tat system comprises two distinct complexes: a TatABC complex, containing multiple copies of TatA, TatB and TatC subunits, and a separate TatA complex, containing only TatA subunits. Substrates initially bind to the TatABC complex, which probably triggers association of the separate TatA complex to form the active translocon.

Its subcellular location is the cell inner membrane. Its function is as follows. Part of the twin-arginine translocation (Tat) system that transports large folded proteins containing a characteristic twin-arginine motif in their signal peptide across membranes. TatA could form the protein-conducting channel of the Tat system. This Stenotrophomonas maltophilia (strain K279a) protein is Sec-independent protein translocase protein TatA.